The following is a 320-amino-acid chain: Annexin A5 (320 aa).

At Ala2 the chain carries N-acetylalanine. Annexin repeat units follow at residues Phe15–Lys86, Pro87–Gln158, Ala170–Lys242, and Ser246–Gly317. Lys29 participates in a covalent cross-link: Glycyl lysine isopeptide (Lys-Gly) (interchain with G-Cter in SUMO1); alternate. Lys29 is covalently cross-linked (Glycyl lysine isopeptide (Lys-Gly) (interchain with G-Cter in SUMO2); alternate). Residue Ser37 is modified to Phosphoserine. An N6-acetyllysine mark is found at Lys70, Lys76, Lys79, Lys97, and Lys101. An N6-succinyllysine modification is found at Lys290. The short motif at Leu314 to Asp320 is the [IL]-x-C-x-x-[DE] motif element.

Belongs to the annexin family. Monomer. Binds ATRX and EIF5B. S-nitrosylation is induced by interferon-gamma and oxidatively-modified low-densitity lipoprotein (LDL(ox)) possibly implicating the iNOS-S100A8/9 transnitrosylase complex.

Functionally, this protein is an anticoagulant protein that acts as an indirect inhibitor of the thromboplastin-specific complex, which is involved in the blood coagulation cascade. This is Annexin A5 (ANXA5) from Macaca fascicularis (Crab-eating macaque).